Here is a 281-residue protein sequence, read N- to C-terminus: Cytosolic Fe-S cluster assembly factor CFD1 (281 aa).

24–31 serves as a coordination point for ATP; sequence GKGGVGKS. Residues cysteine 201 and cysteine 204 each coordinate [4Fe-4S] cluster.

It belongs to the Mrp/NBP35 ATP-binding proteins family. NUBP2/CFD1 subfamily. As to quaternary structure, heterotetramer of 2 NBP35 and 2 CFD1 chains. [4Fe-4S] cluster is required as a cofactor.

Its subcellular location is the cytoplasm. Component of the cytosolic iron-sulfur (Fe/S) protein assembly (CIA) machinery. Required for maturation of extramitochondrial Fe-S proteins. The NBP35-CFD1 heterotetramer forms a Fe-S scaffold complex, mediating the de novo assembly of an Fe-S cluster and its transfer to target apoproteins. Required for biogenesis and export of both ribosomal subunits, which may reflect a role in assembly of the Fe/S clusters in RLI1, a protein which performs rRNA processing and ribosome export. This is Cytosolic Fe-S cluster assembly factor CFD1 from Eremothecium gossypii (strain ATCC 10895 / CBS 109.51 / FGSC 9923 / NRRL Y-1056) (Yeast).